A 290-amino-acid chain; its full sequence is 4-hydroxybenzoate octaprenyltransferase (290 aa).

A run of 8 helical transmembrane segments spans residues Ile23–Val43, Leu46–Val66, Leu99–Ile119, Leu141–Val161, Glu163–Tyr183, Leu213–Asn233, Gly234–Gln254, and Ala268–Trp288.

Belongs to the UbiA prenyltransferase family. The cofactor is Mg(2+).

The protein localises to the cell inner membrane. It carries out the reaction all-trans-octaprenyl diphosphate + 4-hydroxybenzoate = 4-hydroxy-3-(all-trans-octaprenyl)benzoate + diphosphate. The protein operates within cofactor biosynthesis; ubiquinone biosynthesis. Functionally, catalyzes the prenylation of para-hydroxybenzoate (PHB) with an all-trans polyprenyl group. Mediates the second step in the final reaction sequence of ubiquinone-8 (UQ-8) biosynthesis, which is the condensation of the polyisoprenoid side chain with PHB, generating the first membrane-bound Q intermediate 3-octaprenyl-4-hydroxybenzoate. This Shigella flexneri protein is 4-hydroxybenzoate octaprenyltransferase.